The following is a 612-amino-acid chain: Chaperone protein DnaK (612 aa).

Phosphothreonine; by autocatalysis is present on Thr-173. The span at Asp-524–Gln-544 shows a compositional bias: basic and acidic residues. Disordered stretches follow at residues Asp-524 to Ala-560 and Leu-572 to Lys-612. A compositionally biased stretch (low complexity) spans Glu-574–Glu-586. The span at Gln-587–Lys-612 shows a compositional bias: acidic residues.

It belongs to the heat shock protein 70 family.

Acts as a chaperone. The sequence is that of Chaperone protein DnaK from Oceanobacillus iheyensis (strain DSM 14371 / CIP 107618 / JCM 11309 / KCTC 3954 / HTE831).